A 219-amino-acid polypeptide reads, in one-letter code: 2-hydroxy-3-keto-5-methylthiopentenyl-1-phosphate phosphatase (219 aa).

The protein belongs to the HAD-like hydrolase superfamily. MtnX family.

It carries out the reaction 2-hydroxy-5-methylsulfanyl-3-oxopent-1-enyl phosphate + H2O = 1,2-dihydroxy-5-(methylsulfanyl)pent-1-en-3-one + phosphate. Its pathway is amino-acid biosynthesis; L-methionine biosynthesis via salvage pathway; L-methionine from S-methyl-5-thio-alpha-D-ribose 1-phosphate: step 4/6. Dephosphorylates 2-hydroxy-3-keto-5-methylthiopentenyl-1-phosphate (HK-MTPenyl-1-P) yielding 1,2-dihydroxy-3-keto-5-methylthiopentene (DHK-MTPene). In Exiguobacterium sibiricum (strain DSM 17290 / CCUG 55495 / CIP 109462 / JCM 13490 / 255-15), this protein is 2-hydroxy-3-keto-5-methylthiopentenyl-1-phosphate phosphatase.